The sequence spans 147 residues: Hemoglobin subunit beta-1 (147 aa).

V2 carries the post-translational modification N-acetylvaline. The region spanning 3–147 (HLTDAEKAAV…VATALAHKYH (145 aa)) is the Globin domain. K18 bears the N6-succinyllysine mark. Residues S21, S45, and S51 each carry the phosphoserine modification. K60 carries the N6-succinyllysine modification. Residues H64 and H93 each contribute to the heme b site. The residue at position 105 (R105) is an Asymmetric dimethylarginine. Residue T124 is modified to Phosphothreonine.

Belongs to the globin family. Heterotetramer of two alpha chains and two beta chains. Red blood cells.

Involved in oxygen transport from the lung to the various peripheral tissues. The protein is Hemoglobin subunit beta-1 (Hbb-b1) of Mus musculus (Mouse).